A 148-amino-acid chain; its full sequence is Lysozyme C (148 aa).

The signal sequence occupies residues 1–18; it reads MKAVIILGLVLLSVTVQG. A C-type lysozyme domain is found at 19-148; the sequence is KIFERCELAR…VSQYVQGCGV (130 aa). 4 disulfide bridges follow: cysteine 24–cysteine 146, cysteine 48–cysteine 134, cysteine 83–cysteine 99, and cysteine 95–cysteine 113. Active-site residues include glutamate 53 and aspartate 71.

The protein belongs to the glycosyl hydrolase 22 family. Monomer.

It is found in the secreted. It carries out the reaction Hydrolysis of (1-&gt;4)-beta-linkages between N-acetylmuramic acid and N-acetyl-D-glucosamine residues in a peptidoglycan and between N-acetyl-D-glucosamine residues in chitodextrins.. Functionally, lysozymes have primarily a bacteriolytic function; those in tissues and body fluids are associated with the monocyte-macrophage system and enhance the activity of immunoagents. In Papio anubis (Olive baboon), this protein is Lysozyme C (LYZ).